A 70-amino-acid polypeptide reads, in one-letter code: Protein SlyX homolog (70 aa).

It belongs to the SlyX family.

The protein is Protein SlyX homolog of Shewanella piezotolerans (strain WP3 / JCM 13877).